A 172-amino-acid polypeptide reads, in one-letter code: SsrA-binding protein (172 aa).

The protein belongs to the SmpB family.

Its subcellular location is the cytoplasm. Required for rescue of stalled ribosomes mediated by trans-translation. Binds to transfer-messenger RNA (tmRNA), required for stable association of tmRNA with ribosomes. tmRNA and SmpB together mimic tRNA shape, replacing the anticodon stem-loop with SmpB. tmRNA is encoded by the ssrA gene; the 2 termini fold to resemble tRNA(Ala) and it encodes a 'tag peptide', a short internal open reading frame. During trans-translation Ala-aminoacylated tmRNA acts like a tRNA, entering the A-site of stalled ribosomes, displacing the stalled mRNA. The ribosome then switches to translate the ORF on the tmRNA; the nascent peptide is terminated with the 'tag peptide' encoded by the tmRNA and targeted for degradation. The ribosome is freed to recommence translation, which seems to be the essential function of trans-translation. This is SsrA-binding protein from Dehalococcoides mccartyi (strain ATCC BAA-2100 / JCM 16839 / KCTC 5957 / BAV1).